Consider the following 700-residue polypeptide: Elongation factor G (700 aa).

One can recognise a tr-type G domain in the interval 8–290 (ERYRNIGISA…AVIDYLPSPV (283 aa)). Residues 17 to 24 (AHIDAGKT), 88 to 92 (DTPGH), and 142 to 145 (NKMD) contribute to the GTP site.

Belongs to the TRAFAC class translation factor GTPase superfamily. Classic translation factor GTPase family. EF-G/EF-2 subfamily.

The protein localises to the cytoplasm. Its function is as follows. Catalyzes the GTP-dependent ribosomal translocation step during translation elongation. During this step, the ribosome changes from the pre-translocational (PRE) to the post-translocational (POST) state as the newly formed A-site-bound peptidyl-tRNA and P-site-bound deacylated tRNA move to the P and E sites, respectively. Catalyzes the coordinated movement of the two tRNA molecules, the mRNA and conformational changes in the ribosome. This chain is Elongation factor G, found in Leptothrix cholodnii (strain ATCC 51168 / LMG 8142 / SP-6) (Leptothrix discophora (strain SP-6)).